The chain runs to 368 residues: High affinity transport system protein p37 (368 aa).

Positions 1–25 are cleaved as a signal peptide; sequence MLFKKFTWVIPSLFLTIISTSLLIS. Residue Cys-26 is the site of N-palmitoyl cysteine attachment. Cys-26 carries the S-diacylglycerol cysteine lipid modification.

It localises to the cell membrane. Its function is as follows. P37 is part of a high-affinity transport system. This Mycoplasma genitalium (strain ATCC 33530 / DSM 19775 / NCTC 10195 / G37) (Mycoplasmoides genitalium) protein is High affinity transport system protein p37 (p37).